The sequence spans 312 residues: Malate dehydrogenase (312 aa).

NAD(+) is bound by residues Gly7–Gly13 and Asp34. 2 residues coordinate substrate: Arg81 and Arg87. Residues Asn94 and Ile117 to Asn119 contribute to the NAD(+) site. Substrate-binding residues include Asn119 and Arg153. The active-site Proton acceptor is His177. Position 227 (Met227) interacts with NAD(+).

This sequence belongs to the LDH/MDH superfamily. MDH type 1 family. Homodimer.

The catalysed reaction is (S)-malate + NAD(+) = oxaloacetate + NADH + H(+). Catalyzes the reversible oxidation of malate to oxaloacetate. The chain is Malate dehydrogenase from Enterobacter sp. (strain 638).